Here is a 396-residue protein sequence, read N- to C-terminus: Tryptophan synthase beta chain (396 aa).

Residue K88 is modified to N6-(pyridoxal phosphate)lysine.

This sequence belongs to the TrpB family. Tetramer of two alpha and two beta chains. Pyridoxal 5'-phosphate serves as cofactor.

It carries out the reaction (1S,2R)-1-C-(indol-3-yl)glycerol 3-phosphate + L-serine = D-glyceraldehyde 3-phosphate + L-tryptophan + H2O. It functions in the pathway amino-acid biosynthesis; L-tryptophan biosynthesis; L-tryptophan from chorismate: step 5/5. Functionally, the beta subunit is responsible for the synthesis of L-tryptophan from indole and L-serine. This Actinobacillus pleuropneumoniae serotype 7 (strain AP76) protein is Tryptophan synthase beta chain.